Reading from the N-terminus, the 220-residue chain is 7-cyano-7-deazaguanine synthase (220 aa).

10-20 is a binding site for ATP; sequence FSGGQDSTTCL. Residues Cys-186, Cys-195, Cys-198, and Cys-201 each contribute to the Zn(2+) site.

Belongs to the QueC family. Homodimer. It depends on Zn(2+) as a cofactor.

The enzyme catalyses 7-carboxy-7-deazaguanine + NH4(+) + ATP = 7-cyano-7-deazaguanine + ADP + phosphate + H2O + H(+). It participates in purine metabolism; 7-cyano-7-deazaguanine biosynthesis. In terms of biological role, catalyzes the ATP-dependent conversion of 7-carboxy-7-deazaguanine (CDG) to 7-cyano-7-deazaguanine (preQ(0)). This chain is 7-cyano-7-deazaguanine synthase, found in Bacillus cereus (strain ATCC 14579 / DSM 31 / CCUG 7414 / JCM 2152 / NBRC 15305 / NCIMB 9373 / NCTC 2599 / NRRL B-3711).